The chain runs to 473 residues: ATP synthase subunit beta (473 aa).

Residue 153 to 160 (GGAGVGKT) coordinates ATP.

The protein belongs to the ATPase alpha/beta chains family. As to quaternary structure, F-type ATPases have 2 components, CF(1) - the catalytic core - and CF(0) - the membrane proton channel. CF(1) has five subunits: alpha(3), beta(3), gamma(1), delta(1), epsilon(1). CF(0) has three main subunits: a(1), b(2) and c(9-12). The alpha and beta chains form an alternating ring which encloses part of the gamma chain. CF(1) is attached to CF(0) by a central stalk formed by the gamma and epsilon chains, while a peripheral stalk is formed by the delta and b chains.

The protein resides in the cell inner membrane. It carries out the reaction ATP + H2O + 4 H(+)(in) = ADP + phosphate + 5 H(+)(out). Produces ATP from ADP in the presence of a proton gradient across the membrane. The catalytic sites are hosted primarily by the beta subunits. The chain is ATP synthase subunit beta from Rickettsia bellii (strain OSU 85-389).